The sequence spans 306 residues: D-alanine--D-alanine ligase (306 aa).

Residues 101 to 303 form the ATP-grasp domain; the sequence is KQVWQGIGLT…FSQLVVKILE (203 aa). 134–189 contacts ATP; it reads VADLGLPLIVKPSLEGSSVGMTKVNEISELRGALEAAFRYDVDLLVEKWLHGPEYT. 3 residues coordinate Mg(2+): aspartate 257, glutamate 270, and asparagine 272.

The protein belongs to the D-alanine--D-alanine ligase family. The cofactor is Mg(2+). It depends on Mn(2+) as a cofactor.

The protein localises to the cytoplasm. It carries out the reaction 2 D-alanine + ATP = D-alanyl-D-alanine + ADP + phosphate + H(+). It participates in cell wall biogenesis; peptidoglycan biosynthesis. In terms of biological role, cell wall formation. The polypeptide is D-alanine--D-alanine ligase (Photorhabdus laumondii subsp. laumondii (strain DSM 15139 / CIP 105565 / TT01) (Photorhabdus luminescens subsp. laumondii)).